The sequence spans 436 residues: Bystin (436 aa).

The interval 1 to 105 (MPKLKVTRGA…GSDEEDEEWP (105 aa)) is disordered. Position 54 is a phosphoserine (Ser54). Residues 70-86 (TEHATGDRPAKPRERAT) show a composition bias toward basic and acidic residues. Over residues 96–105 (GSDEEDEEWP) the composition is skewed to acidic residues. The residue at position 97 (Ser97) is a Phosphoserine. Position 155 is a phosphothreonine (Thr155). Ser166 and Ser413 each carry phosphoserine.

It belongs to the bystin family. In terms of assembly, binds trophinin, tastin and cytokeratins.

Its subcellular location is the cytoplasm. The protein resides in the nucleus. The protein localises to the nucleolus. Required for processing of 20S pre-rRNA precursor and biogenesis of 40S ribosomal subunits. The chain is Bystin from Rattus norvegicus (Rat).